A 78-amino-acid polypeptide reads, in one-letter code: MANIKSAIKRAELNVKQNEKNSAQKSAMRTAIKAFEANPSEELFRAASSAIDKAETKGLIHKNKASRDKARLSAKLVK.

Belongs to the bacterial ribosomal protein bS20 family.

Binds directly to 16S ribosomal RNA. This is Small ribosomal subunit protein bS20 from Streptococcus pneumoniae serotype 4 (strain ATCC BAA-334 / TIGR4).